A 140-amino-acid polypeptide reads, in one-letter code: MAKKVDKVVKLQIPAGKANPAPPVGPALGQAGVNIMGFCKEFNARTQDQAGLIIPVEISVYEDRSFTFITKTPPAPVLLKKAAGIEKGSGEPNKAKVATVTKDQVREIANSKMQDLNAADEEAAMRIIEGTARSMGIVVE.

The protein belongs to the universal ribosomal protein uL11 family. Part of the ribosomal stalk of the 50S ribosomal subunit. Interacts with L10 and the large rRNA to form the base of the stalk. L10 forms an elongated spine to which L12 dimers bind in a sequential fashion forming a multimeric L10(L12)X complex. Post-translationally, one or more lysine residues are methylated.

Forms part of the ribosomal stalk which helps the ribosome interact with GTP-bound translation factors. The protein is Large ribosomal subunit protein uL11 of Staphylococcus aureus (strain bovine RF122 / ET3-1).